The chain runs to 43 residues: Protein PsbN (43 aa).

A helical transmembrane segment spans residues 4–24 (ATVLSITFAVILIAITGLAVY).

Belongs to the PsbN family.

Its subcellular location is the cellular thylakoid membrane. In terms of biological role, may play a role in photosystem I and II biogenesis. The protein is Protein PsbN of Synechocystis sp. (strain ATCC 27184 / PCC 6803 / Kazusa).